A 228-amino-acid chain; its full sequence is L-ribulose-5-phosphate 4-epimerase UlaF (228 aa).

Substrate-binding positions include 26-27 (GN), 43-44 (SG), and 72-73 (SS). D74, H93, and H95 together coordinate Zn(2+). D118 (proton donor/acceptor) is an active-site residue. Position 167 (H167) interacts with Zn(2+). The active-site Proton donor/acceptor is the Y225.

Belongs to the aldolase class II family. AraD/FucA subfamily. It depends on Zn(2+) as a cofactor.

The enzyme catalyses L-ribulose 5-phosphate = D-xylulose 5-phosphate. It participates in cofactor degradation; L-ascorbate degradation; D-xylulose 5-phosphate from L-ascorbate: step 4/4. In terms of biological role, catalyzes the isomerization of L-ribulose 5-phosphate to D-xylulose 5-phosphate. Is involved in the anaerobic L-ascorbate utilization. The sequence is that of L-ribulose-5-phosphate 4-epimerase UlaF from Salmonella choleraesuis (strain SC-B67).